The chain runs to 172 residues: Large ribosomal subunit protein uL10 (172 aa).

Belongs to the universal ribosomal protein uL10 family. As to quaternary structure, part of the ribosomal stalk of the 50S ribosomal subunit. The N-terminus interacts with L11 and the large rRNA to form the base of the stalk. The C-terminus forms an elongated spine to which L12 dimers bind in a sequential fashion forming a multimeric L10(L12)X complex.

Functionally, forms part of the ribosomal stalk, playing a central role in the interaction of the ribosome with GTP-bound translation factors. This is Large ribosomal subunit protein uL10 (rplJ) from Liberibacter africanus subsp. capensis.